A 440-amino-acid chain; its full sequence is MNKFRTFPQINTLIEDESLKSYPFYIKAFFCKKVVAKLKENFFQDEISKDKLLLEIKKEIKTFYRKDLQSVINASGVVIHTNLGRSVIHEELYEACKDIICNYSNVEFDLENGKRGSRYALVLEKLKMLFECEDALVVNNNAAAVFLVLNSLCYDKEVISSRGELVEIGGSFRVPEVIKAAGVKLCEVGTSNKTHLKDYEQAINENTALILKTHKSNFALMGFHSEVNIKDLHELAKEKELLSYYDLGSGWCENLNEKLIKNEPKIRKLVQECDILSFSGDKLFGSVQAGIILGKKELIEKLKQNQLLRMLRVDKLTLSFLNESLKAYLQKDYEKIITLKLLNDDLSFIEKKALRVQKELKFQTQLKKSKSLVGGGSMPDKSLDTYILTFQGDALKLQTRFRKENIIGRIENDEFVLDFRTIRENELQKLILTINQMENL.

Lys-282 carries the post-translational modification N6-(pyridoxal phosphate)lysine.

Belongs to the SelA family. It depends on pyridoxal 5'-phosphate as a cofactor.

The protein localises to the cytoplasm. The catalysed reaction is L-seryl-tRNA(Sec) + selenophosphate + H(+) = L-selenocysteinyl-tRNA(Sec) + phosphate. Its pathway is aminoacyl-tRNA biosynthesis; selenocysteinyl-tRNA(Sec) biosynthesis; selenocysteinyl-tRNA(Sec) from L-seryl-tRNA(Sec) (bacterial route): step 1/1. Its function is as follows. Converts seryl-tRNA(Sec) to selenocysteinyl-tRNA(Sec) required for selenoprotein biosynthesis. This chain is L-seryl-tRNA(Sec) selenium transferase, found in Campylobacter jejuni subsp. jejuni serotype O:2 (strain ATCC 700819 / NCTC 11168).